The chain runs to 238 residues: tRNA1(Val) (adenine(37)-N6)-methyltransferase (238 aa).

This sequence belongs to the methyltransferase superfamily. tRNA (adenine-N(6)-)-methyltransferase family.

The protein resides in the cytoplasm. The enzyme catalyses adenosine(37) in tRNA1(Val) + S-adenosyl-L-methionine = N(6)-methyladenosine(37) in tRNA1(Val) + S-adenosyl-L-homocysteine + H(+). Its function is as follows. Specifically methylates the adenine in position 37 of tRNA(1)(Val) (anticodon cmo5UAC). The protein is tRNA1(Val) (adenine(37)-N6)-methyltransferase of Shewanella sp. (strain W3-18-1).